The primary structure comprises 164 residues: MSNVTFKNDPVTLLGAEKKVGDSAPDFTVLANDLSKKHLSDYKGKVKVISVVPSIDTGVCSEQTRRFNQEATNLENVQILTISMDLPFAQKRWCAANGIDRVDTLSDHREADFGQKYGVIIEELRLLSRAVFVVDENDKITYVEYLSEVSNHPDYEAVLSHLNK.

Residues 18–164 (KKVGDSAPDF…YEAVLSHLNK (147 aa)) form the Thioredoxin domain. The active-site Cysteine sulfenic acid (-SOH) intermediate is the cysteine 60. Cysteine 60 and cysteine 94 are joined by a disulfide.

The protein belongs to the peroxiredoxin family. Tpx subfamily. As to quaternary structure, homodimer.

The enzyme catalyses a hydroperoxide + [thioredoxin]-dithiol = an alcohol + [thioredoxin]-disulfide + H2O. In terms of biological role, thiol-specific peroxidase that catalyzes the reduction of hydrogen peroxide and organic hydroperoxides to water and alcohols, respectively. Plays a role in cell protection against oxidative stress by detoxifying peroxides. In Oceanobacillus iheyensis (strain DSM 14371 / CIP 107618 / JCM 11309 / KCTC 3954 / HTE831), this protein is Thiol peroxidase.